A 191-amino-acid polypeptide reads, in one-letter code: ECF RNA polymerase sigma-E factor (191 aa).

Positions 1 to 153 (MSEQLTDQVL…MAITLRELDG (153 aa)) are binds RNAP core. The segment at 25-92 (LVVRYQHKVA…KNYLVAQGRR (68 aa)) is sigma-70 factor domain-2. The short motif at 48-61 (DVVQESFIKAYRAL) is the Polymerase core binding element. The segment at 129-180 (QIVFRTIESLPEDLRMAITLRELDGLSYEEIAAIMDCPVGTVRSRIFRAREA) is sigma-70 factor domain-4. Residues 156-175 (YEEIAAIMDCPVGTVRSRIF) constitute a DNA-binding region (H-T-H motif).

This sequence belongs to the sigma-70 factor family. ECF subfamily. In terms of assembly, interacts transiently with the RNAP catalytic core formed by RpoA, RpoB, RpoC and RpoZ (2 alpha, 1 beta, 1 beta' and 1 omega subunit) to form the RNAP holoenzyme that can initiate transcription. Interacts 1:1 with anti-sigma-E factor RseA which prevents binding to RNAP catalytic core.

It is found in the cytoplasm. Its activity is regulated as follows. ECF sigma-E is held in an inactive form by its cognate anti-sigma factor (RseA) until released by regulated intramembrane proteolysis (RIP). RIP occurs when an extracytoplasmic signal (periplasmic, acid or heat stress) triggers a concerted proteolytic cascade to transmit information and elicit cellular responses. In S.typhimurium there are 2 cascades, the heat shock response which depends on DegS and RseP, and acid response which depends only on RseP. The anti-sigma factor RseA is an inner membrane protein, binding sigma-E in the cytoplasm and RseB in the periplasm. RseA is first cut extracytoplasmically (site-1 protease, S1P, by DegS), then within the membrane itself (site-2 protease, S2P, by RseP), while cytoplasmic proteases (predominantly ClpX-ClpP) finish degrading the regulatory protein, liberating sigma-E. Degradation of RseA requires 2 signals to activate DegS; an outer membrane protein (OMP) signal activates DegS, while an LPS signal causes release of RseB from RseA, freeing RseA to be cleaved. OMP stress can be abrogated by overexpression of the sRNA rybB. Its function is as follows. Sigma factors are initiation factors that promote the attachment of RNA polymerase (RNAP) to specific initiation sites and are then released. Extracytoplasmic function (ECF) sigma-E controls the envelope stress response, responding to periplasmic protein stress, increased levels of periplasmic lipopolysaccharide (LPS) as well as acid stress, heat shock and oxidative stress; it controls protein processing in the extracytoplasmic compartment. In Salmonella typhimurium (strain 14028s / SGSC 2262), this protein is ECF RNA polymerase sigma-E factor (rpoE).